Reading from the N-terminus, the 427-residue chain is Aspartate aminotransferase, mitochondrial (427 aa).

The transit peptide at 1 to 26 (MALLKSRLLVGVARCQPCLAAVQGRA) directs the protein to the mitochondrion. Substrate is bound by residues Gly-62, Trp-159, and Asn-212. Lys-276 bears the N6-(pyridoxal phosphate)lysine mark. Arg-404 contributes to the substrate binding site.

It belongs to the class-I pyridoxal-phosphate-dependent aminotransferase family. As to quaternary structure, homodimer. Pyridoxal 5'-phosphate serves as cofactor.

It localises to the mitochondrion matrix. It carries out the reaction L-aspartate + 2-oxoglutarate = oxaloacetate + L-glutamate. The enzyme catalyses L-kynurenine + 2-oxoglutarate = kynurenate + L-glutamate + H2O. In terms of biological role, catalyzes the irreversible transamination of the L-tryptophan metabolite L-kynurenine to form kynurenic acid (KA). As a member of the malate-aspartate shuttle, it has a key role in the intracellular NAD(H) redox balance. Is important for metabolite exchange between mitochondria and cytosol, and for amino acid metabolism. This chain is Aspartate aminotransferase, mitochondrial (got2), found in Xenopus tropicalis (Western clawed frog).